Here is a 475-residue protein sequence, read N- to C-terminus: Probable L-cysteine desulfhydrase, chloroplastic (475 aa).

The transit peptide at 1 to 24 (MASSLSPPEEASYHHRHTKRYTSS) directs the protein to the chloroplast. The interval 1-40 (MASSLSPPEEASYHHRHTKRYTSSASSASSTTNGTVESSV) is disordered. Over residues 22-32 (TSSASSASSTT) the composition is skewed to low complexity. At Lys-284 the chain carries N6-(pyridoxal phosphate)lysine.

The protein belongs to the class-V pyridoxal-phosphate-dependent aminotransferase family. As to quaternary structure, interacts in vitro with QS.

The protein localises to the plastid. It is found in the chloroplast. In terms of biological role, may catalyze the production of hydrogen sulfide (H2S) from cysteine. In Arabidopsis thaliana (Mouse-ear cress), this protein is Probable L-cysteine desulfhydrase, chloroplastic.